A 432-amino-acid chain; its full sequence is Glutamyl-tRNA reductase (432 aa).

Substrate is bound by residues 49 to 52 (TCNR), Ser107, 112 to 114 (ETQ), and Gln118. Catalysis depends on Cys50, which acts as the Nucleophile. 186-191 (GAGEMG) contacts NADP(+).

It belongs to the glutamyl-tRNA reductase family. Homodimer.

The catalysed reaction is (S)-4-amino-5-oxopentanoate + tRNA(Glu) + NADP(+) = L-glutamyl-tRNA(Glu) + NADPH + H(+). It functions in the pathway porphyrin-containing compound metabolism; protoporphyrin-IX biosynthesis; 5-aminolevulinate from L-glutamyl-tRNA(Glu): step 1/2. Its function is as follows. Catalyzes the NADPH-dependent reduction of glutamyl-tRNA(Glu) to glutamate 1-semialdehyde (GSA). The sequence is that of Glutamyl-tRNA reductase from Campylobacter jejuni subsp. jejuni serotype O:23/36 (strain 81-176).